Reading from the N-terminus, the 396-residue chain is Beta-1,3-N-acetylglucosaminyltransferase radical fringe (396 aa).

Over 1 to 6 (MNFSCL) the chain is Cytoplasmic. Residues 7–27 (GLSKICFLVSVIFCTFLLLFI) traverse the membrane as a helical; Signal-anchor for type II membrane protein segment. Over 28 to 396 (PKTKTPWRPR…THWCPPRKTR (369 aa)) the chain is Lumenal. N-linked (GlcNAc...) asparagine glycans are attached at residues N49 and N120. Position 145 (R145) interacts with substrate. N184 is a glycosylation site (N-linked (GlcNAc...) asparagine). 2 cysteine pairs are disulfide-bonded: C185/C196 and C214/C277. D218 is a substrate binding site. D219 contacts Mn(2+). Residue D307 is part of the active site. H331 contributes to the Mn(2+) binding site. Cysteines 381 and 390 form a disulfide.

This sequence belongs to the glycosyltransferase 31 family. Requires Mn(2+) as cofactor. Detected in the mesanchymal region of the developing limb. Expressed in mesoderm but not in ectoderm with no evident boundary of expression.

It is found in the golgi apparatus membrane. The catalysed reaction is 3-O-(alpha-L-fucosyl)-L-threonyl-[EGF-like domain protein] + UDP-N-acetyl-alpha-D-glucosamine = 3-O-(N-acetyl-beta-D-glucosaminyl-(1-&gt;3)-alpha-L-fucosyl)-L-threonyl-[EGF-like domain protein] + UDP + H(+). The enzyme catalyses 3-O-(alpha-L-fucosyl)-L-seryl-[EGF-like domain protein] + UDP-N-acetyl-alpha-D-glucosamine = 3-O-(N-acetyl-beta-D-glucosaminyl-(1-&gt;3)-alpha-L-fucosyl)-L-seryl-[EGF-like domain protein] + UDP + H(+). Glycosyltransferase that initiates the elongation of O-linked fucose residues attached to EGF-like repeats in the extracellular domain of Notch molecules. Involved in forelimb development and in adult forelimb regeneration. This is Beta-1,3-N-acetylglucosaminyltransferase radical fringe (RFNG) from Notophthalmus viridescens (Eastern newt).